The sequence spans 259 residues: Small ribosomal subunit protein uS2 (259 aa).

The segment at 232–259 is disordered; it reads KAMEAEETKAAEKAVETEAKEETPQEAK.

The protein belongs to the universal ribosomal protein uS2 family.

The chain is Small ribosomal subunit protein uS2 from Maridesulfovibrio salexigens (strain ATCC 14822 / DSM 2638 / NCIMB 8403 / VKM B-1763) (Desulfovibrio salexigens).